The chain runs to 106 residues: Trp operon repressor homolog (106 aa).

The DNA-binding element occupies 59–82; the sequence is QREIQQILNTSAATITRGSNMIKI.

The protein belongs to the TrpR family. In terms of assembly, homodimer.

The protein resides in the cytoplasm. Its function is as follows. This protein is an aporepressor. When complexed with L-tryptophan it binds the operator region of the trp operon and prevents the initiation of transcription. In Histophilus somni (strain 129Pt) (Haemophilus somnus), this protein is Trp operon repressor homolog.